A 321-amino-acid polypeptide reads, in one-letter code: MMQLPERVEGLHHITVATGSAQGDVDLLVKTLGQRLVKKTMFYDGARPVYHLYFGNELGEPGTLYTTFPVRQAGYTGKRGAGQISAVSYNAPVGTLSWWQEHLIKRAVTVSEVRERFGQKYLSFEHPDCGVGFEIIEQDTDGQFEPWDSPYVPKEVALRGFHSWTATLNRNEEMDSFMRNAWNLKPQGRDGNYQRYAFGNGGAAKVLDVYIDEDERPGTWALGEGQVHHAAFEVADLDVQAALKFDVEGLGYTDFSDRKHRGYFESIYVRTPGGVLFEASVTLGFTHDESPEKLGSEVKVAPQLEGVKDELLRTMNDPIVI.

VOC domains follow at residues 10–138 (GLHH…IIEQ) and 160–282 (GFHS…ASVT). Positions 162, 229, and 278 each coordinate Fe cation.

The protein belongs to the extradiol ring-cleavage dioxygenase family. Requires Fe(2+) as cofactor.

The catalysed reaction is hydroquinone + O2 = (2E,4Z)-4-hydroxy-6-oxohexa-2,4-dienoate + H(+). It catalyses the reaction chlorohydroquinone + O2 = 5-chlorocarbonyl-4-hydroxy-penta-2,4-dienoate + H(+). The protein operates within xenobiotic degradation; gamma-hexachlorocyclohexane degradation. Its function is as follows. Cleaves aromatic rings with two hydroxyl groups at para positions with consumption of O(2). Catalyzes the cleavage of chlorohydroquinone (CHQ), as part of the gamma-hexachlorocyclohexane (gamma-HCH or lindane) degradation pathway, producing 5-chlorocarbonyl-4-hydroxy-penta-2,4-dienoate as an intermediate product that can react with water yielding maleylacetate. This degradation pathway allows S.japonicum UT26 to grow on gamma-HCH as the sole source of carbon and energy. Can also use hydroquinone (HQ) as substrate, leading to gamma-hydroxymuconic semialdehyde. Is not able to convert catechol, contrary to meta-cleavage dioxygenases. This is Chlorohydroquinone/hydroquinone 1,2-dioxygenase from Sphingobium indicum (strain DSM 16413 / CCM 7287 / MTCC 6362 / UT26 / NBRC 101211 / UT26S) (Sphingobium japonicum).